Here is a 351-residue protein sequence, read N- to C-terminus: DNA beta-glucosyltransferase (351 aa).

As to quaternary structure, monomer.

The enzyme catalyses Transfers a beta-D-glucosyl residue from UDP-alpha-D-glucose to a hydroxymethylcytosine residue in DNA.. It participates in genetic information processing; DNA modification. Its function is as follows. Catalyzes the transfer of glucose from uridine diphosphoglucose to 5-hydroxymethyl cytosine of T4 DNA to yield glucosyl 5-hydroxymethyl cytosine (glc-HMC). This DNA process seems to occur immediately after DNA synthesis since the DNA alpha-glucosyltransferase interacts with the clamp protein gp45. The glc-HMC modification protects the phage genome against its own nucleases and the host restriction endonuclease system. The glc-HMC modification also protects against the host CRISPR-Cas9 defense system. In Enterobacteria phage T4 (Bacteriophage T4), this protein is DNA beta-glucosyltransferase (bgt).